Here is a 330-residue protein sequence, read N- to C-terminus: D-cysteine desulfhydrase (330 aa).

Lys-52 carries the N6-(pyridoxal phosphate)lysine modification.

This sequence belongs to the ACC deaminase/D-cysteine desulfhydrase family. As to quaternary structure, homodimer. The cofactor is pyridoxal 5'-phosphate.

It catalyses the reaction D-cysteine + H2O = hydrogen sulfide + pyruvate + NH4(+) + H(+). In terms of biological role, catalyzes the alpha,beta-elimination reaction of D-cysteine and of several D-cysteine derivatives. It could be a defense mechanism against D-cysteine. The sequence is that of D-cysteine desulfhydrase from Serratia proteamaculans (strain 568).